Reading from the N-terminus, the 42-residue chain is Photosystem II reaction center protein J (42 aa).

Residues 10 to 30 traverse the membrane as a helical segment; sequence IPLWFIGVIAGIAALSIVGLF.

The protein belongs to the PsbJ family. As to quaternary structure, PSII is composed of 1 copy each of membrane proteins PsbA, PsbB, PsbC, PsbD, PsbE, PsbF, PsbH, PsbI, PsbJ, PsbK, PsbL, PsbM, PsbT, PsbX, PsbY, PsbZ, Psb30/Ycf12, at least 3 peripheral proteins of the oxygen-evolving complex and a large number of cofactors. It forms dimeric complexes.

It is found in the plastid. The protein localises to the chloroplast thylakoid membrane. Functionally, one of the components of the core complex of photosystem II (PSII). PSII is a light-driven water:plastoquinone oxidoreductase that uses light energy to abstract electrons from H(2)O, generating O(2) and a proton gradient subsequently used for ATP formation. It consists of a core antenna complex that captures photons, and an electron transfer chain that converts photonic excitation into a charge separation. The chain is Photosystem II reaction center protein J from Zygnema circumcarinatum (Green alga).